Here is a 299-residue protein sequence, read N- to C-terminus: Tyrosine recombinase XerC (299 aa).

The 85-residue stretch at methionine 1 to asparagine 85 folds into the Core-binding (CB) domain. The Tyr recombinase domain occupies arginine 106–aspartate 285. Active-site residues include arginine 146, lysine 170, histidine 237, arginine 240, and histidine 263. Tyrosine 272 (O-(3'-phospho-DNA)-tyrosine intermediate) is an active-site residue.

The protein belongs to the 'phage' integrase family. XerC subfamily. As to quaternary structure, forms a cyclic heterotetrameric complex composed of two molecules of XerC and two molecules of XerD.

The protein localises to the cytoplasm. Its function is as follows. Site-specific tyrosine recombinase, which acts by catalyzing the cutting and rejoining of the recombining DNA molecules. The XerC-XerD complex is essential to convert dimers of the bacterial chromosome into monomers to permit their segregation at cell division. It also contributes to the segregational stability of plasmids. The polypeptide is Tyrosine recombinase XerC (Pseudomonas entomophila (strain L48)).